We begin with the raw amino-acid sequence, 531 residues long: Histone-arginine methyltransferase CARMER (531 aa).

In terms of domain architecture, SAM-dependent MTase PRMT-type spans 141-450 (ASQYFQFYGY…QSYDVTIDLH (310 aa)). Residues Gln154, Arg163, Gly187, Glu209, Glu238, and Thr266 each coordinate S-adenosyl-L-methionine. Asymmetric dimethylarginine; by autocatalysis is present on Arg501.

It belongs to the class I-like SAM-binding methyltransferase superfamily. Protein arginine N-methyltransferase family. As to quaternary structure, homodimer. Post-translationally, the dimethylated protein is the major form.

Its subcellular location is the cytoplasm. It localises to the nucleus. The enzyme catalyses L-arginyl-[protein] + 2 S-adenosyl-L-methionine = N(omega),N(omega)-dimethyl-L-arginyl-[protein] + 2 S-adenosyl-L-homocysteine + 2 H(+). In terms of biological role, methylates (mono- and asymmetric dimethylation) the guanidino nitrogens of arginyl residues in proteins. May methylate histone H3 at 'Arg-17' and activate transcription via chromatin remodeling. This chain is Histone-arginine methyltransferase CARMER (Art4), found in Drosophila persimilis (Fruit fly).